We begin with the raw amino-acid sequence, 270 residues long: tRNA pseudouridine synthase A (270 aa).

The active-site Nucleophile is the Asp-51. Tyr-109 provides a ligand contact to substrate.

This sequence belongs to the tRNA pseudouridine synthase TruA family. As to quaternary structure, homodimer.

It catalyses the reaction uridine(38/39/40) in tRNA = pseudouridine(38/39/40) in tRNA. In terms of biological role, formation of pseudouridine at positions 38, 39 and 40 in the anticodon stem and loop of transfer RNAs. This is tRNA pseudouridine synthase A from Burkholderia multivorans (strain ATCC 17616 / 249).